The chain runs to 75 residues: Exodeoxyribonuclease 7 small subunit (75 aa).

This sequence belongs to the XseB family. Heterooligomer composed of large and small subunits.

It localises to the cytoplasm. It carries out the reaction Exonucleolytic cleavage in either 5'- to 3'- or 3'- to 5'-direction to yield nucleoside 5'-phosphates.. In terms of biological role, bidirectionally degrades single-stranded DNA into large acid-insoluble oligonucleotides, which are then degraded further into small acid-soluble oligonucleotides. In Listeria innocua serovar 6a (strain ATCC BAA-680 / CLIP 11262), this protein is Exodeoxyribonuclease 7 small subunit.